A 460-amino-acid polypeptide reads, in one-letter code: Bifunctional protein GlmU (460 aa).

Residues 1–232 (MENVAAIILA…SDEIMGVNDR (232 aa)) form a pyrophosphorylase region. UDP-N-acetyl-alpha-D-glucosamine contacts are provided by residues 9–12 (LAAG), Lys23, Gln75, and 80–81 (GT). Asp105 serves as a coordination point for Mg(2+). UDP-N-acetyl-alpha-D-glucosamine is bound by residues Gly142, Glu157, Asn172, and Asn230. Position 230 (Asn230) interacts with Mg(2+). The interval 233–253 (AQLAQAARILRRRINRDLMLS) is linker. The interval 254–460 (GVSLVDPEQT…GWRIRMKKKT (207 aa)) is N-acetyltransferase. Arg336 and Lys354 together coordinate UDP-N-acetyl-alpha-D-glucosamine. The active-site Proton acceptor is the His366. Residues Tyr369 and Asn380 each coordinate UDP-N-acetyl-alpha-D-glucosamine. Residues 389 to 390 (NY), Ser408, Ala426, and Arg443 each bind acetyl-CoA.

It in the N-terminal section; belongs to the N-acetylglucosamine-1-phosphate uridyltransferase family. The protein in the C-terminal section; belongs to the transferase hexapeptide repeat family. As to quaternary structure, homotrimer. It depends on Mg(2+) as a cofactor.

The protein localises to the cytoplasm. The catalysed reaction is alpha-D-glucosamine 1-phosphate + acetyl-CoA = N-acetyl-alpha-D-glucosamine 1-phosphate + CoA + H(+). It carries out the reaction N-acetyl-alpha-D-glucosamine 1-phosphate + UTP + H(+) = UDP-N-acetyl-alpha-D-glucosamine + diphosphate. It participates in nucleotide-sugar biosynthesis; UDP-N-acetyl-alpha-D-glucosamine biosynthesis; N-acetyl-alpha-D-glucosamine 1-phosphate from alpha-D-glucosamine 6-phosphate (route II): step 2/2. Its pathway is nucleotide-sugar biosynthesis; UDP-N-acetyl-alpha-D-glucosamine biosynthesis; UDP-N-acetyl-alpha-D-glucosamine from N-acetyl-alpha-D-glucosamine 1-phosphate: step 1/1. It functions in the pathway bacterial outer membrane biogenesis; LPS lipid A biosynthesis. Catalyzes the last two sequential reactions in the de novo biosynthetic pathway for UDP-N-acetylglucosamine (UDP-GlcNAc). The C-terminal domain catalyzes the transfer of acetyl group from acetyl coenzyme A to glucosamine-1-phosphate (GlcN-1-P) to produce N-acetylglucosamine-1-phosphate (GlcNAc-1-P), which is converted into UDP-GlcNAc by the transfer of uridine 5-monophosphate (from uridine 5-triphosphate), a reaction catalyzed by the N-terminal domain. This chain is Bifunctional protein GlmU, found in Pelobacter propionicus (strain DSM 2379 / NBRC 103807 / OttBd1).